A 59-amino-acid chain; its full sequence is Putative HTH-type transcriptional regulator YneL (59 aa).

An HTH araC/xylS-type domain is found at 1 to 59 (MSPLRYQKWLRLNEVRRQMLNEHYDVTTAAYAVGYESYPISVGNIRGCLESHPREILPG). The H-T-H motif DNA-binding region spans 26-49 (VTTAAYAVGYESYPISVGNIRGCL).

The protein is Putative HTH-type transcriptional regulator YneL (yneL) of Escherichia coli (strain K12).